A 136-amino-acid polypeptide reads, in one-letter code: Fluoride-specific ion channel FluC (136 aa).

4 helical membrane passes run 3–23, 46–66, 78–98, and 109–129; these read TLPP…GAVL, ATLA…GVLF, LLIG…SLEV, and FAAL…VFGL. Na(+)-binding residues include G86 and T89.

It belongs to the fluoride channel Fluc/FEX (TC 1.A.43) family.

The protein resides in the cell inner membrane. It carries out the reaction fluoride(in) = fluoride(out). Na(+) is not transported, but it plays an essential structural role and its presence is essential for fluoride channel function. In terms of biological role, fluoride-specific ion channel. Important for reducing fluoride concentration in the cell, thus reducing its toxicity. This Erythrobacter litoralis (strain HTCC2594) protein is Fluoride-specific ion channel FluC.